Consider the following 107-residue polypeptide: Protein RnfH (107 aa).

Residues 82 to 107 form a disordered region; that stretch reads ARRKRAEKAKEEGRANKVTGGRPIER.

It belongs to the UPF0125 (RnfH) family.

This chain is Protein RnfH, found in Pseudoalteromonas translucida (strain TAC 125).